Reading from the N-terminus, the 189-residue chain is Protein GrpE (189 aa).

The segment covering 1 to 38 (MTKSNETERMEESEETHSSDIRSASESDHASGSDHTES) has biased composition (basic and acidic residues). A disordered region spans residues 1–54 (MTKSNETERMEESEETHSSDIRSASESDHASGSDHTESADEIPTADAEQGELEQ).

Belongs to the GrpE family. Homodimer.

It is found in the cytoplasm. Functionally, participates actively in the response to hyperosmotic and heat shock by preventing the aggregation of stress-denatured proteins, in association with DnaK and GrpE. It is the nucleotide exchange factor for DnaK and may function as a thermosensor. Unfolded proteins bind initially to DnaJ; upon interaction with the DnaJ-bound protein, DnaK hydrolyzes its bound ATP, resulting in the formation of a stable complex. GrpE releases ADP from DnaK; ATP binding to DnaK triggers the release of the substrate protein, thus completing the reaction cycle. Several rounds of ATP-dependent interactions between DnaJ, DnaK and GrpE are required for fully efficient folding. The chain is Protein GrpE from Tropheryma whipplei (strain TW08/27) (Whipple's bacillus).